A 130-amino-acid chain; its full sequence is Protein lgg-2 (130 aa).

Residue Gly-130 is the site of Phosphatidylethanolamine amidated glycine attachment.

The protein belongs to the ATG8 family. As to quaternary structure, may interact with vps-39. Interacts with lgg-3; the interaction is direct. Interacts with atg-16.1 (via WD domain) and atg-16.2 (via WD 5-6 repeats); the interactions are direct. Interacts with sepa-1 (via the LIR motifs); the interaction is direct. Interacts with sqst-1 (via the LIR motifs); the interaction is direct. Interacts with epg-2 (via the LIR motifs); the interaction is weak. Interacts with atg-7; the interaction is direct. Interacts with atg-3. The interaction with atg-7 and atg-3 may be required for the lipidation of lgg-2. Post-translationally, this protein is subject to lipidation. Lipidation is regulated by lgg-1.

It is found in the cytoplasmic vesicle. The protein resides in the autophagosome. It localises to the cytoplasm. The protein localises to the cell membrane. Ubiquitin-like modifier involved in the formation of autophagosomal vacuoles (autophagosomes). When lipidated mediates tethering between adjacent membranes and stimulates membrane fusion. Less effective at promoting membrane fusion than lgg-1. Acts upstream of the autophagy protein epg-5 in the aggrephagy pathway, which is the macroautophagic degradation of ubiquitinated protein aggregates, and preferentially interacts with autophagy proteins and substrates containing LIR motifs to mediate autophagosome formation and protein aggregate degradation. In particular binds to components of an atg-5-lgg-3-atg-16 complex to regulate autophagosome formation and cargo sequestration. Required for the degradation of specific sqst-1-containing aggregates during embryogenesis and the early stages of larval development. Involved in allophagy, which is an autophagic process in which paternal mitochondria and organelles are degraded during fertilization, and moreover is required for the degradation of lgg-1-positive allophagic autophagosomes in embryos. Involved in xenophagy, the autophagy-mediated degradation of pathogens and pathogen products, such as toxins. Also plays a role in membrane-pore repair. Through HOPS complex subunit vps-39, tethers lysosomes with autophagosomes to form autolysosomes. Plays a role in the distribution and clearance of germ cell specific P-granules from somatic cells to ensure exclusive localization of the P-granules in germ cells. Essential for dauer development and life-span extension. The polypeptide is Protein lgg-2 (Caenorhabditis elegans).